Reading from the N-terminus, the 89-residue chain is MANIKSAKKDSIISEERRKKNASQRSKMRTFIKKVRLAISSGDKEKSYDAFKKMQPIIDKYATKGLIHKNKAARYKSILSFKIAKLHKN.

The segment at 1-27 (MANIKSAKKDSIISEERRKKNASQRSK) is disordered. The segment covering 7–18 (AKKDSIISEERR) has biased composition (basic and acidic residues).

It belongs to the bacterial ribosomal protein bS20 family.

Its function is as follows. Binds directly to 16S ribosomal RNA. This is Small ribosomal subunit protein bS20 from Buchnera aphidicola subsp. Schizaphis graminum (strain Sg).